Consider the following 472-residue polypeptide: Levansucrase (472 aa).

The N-terminal stretch at 1–29 (MNIKKIVKQATVLTFTTALLAGGATQAFA) is a signal peptide. Residues W85, D86, and S164 each contribute to the sucrose site. D86 serves as the catalytic Nucleophile. D241 serves as a coordination point for Ca(2+). R246 and D247 together coordinate sucrose. 4 residues coordinate Ca(2+): Q272, L308, N310, and D339. Residue E340 participates in sucrose binding. E342 serves as the catalytic Proton donor/acceptor. Residue R360 participates in sucrose binding.

Belongs to the glycosyl hydrolase 68 family.

Its subcellular location is the secreted. It catalyses the reaction [6)-beta-D-fructofuranosyl-(2-&gt;](n) alpha-D-glucopyranoside + sucrose = [6)-beta-D-fructofuranosyl-(2-&gt;](n+1) alpha-D-glucopyranoside + D-glucose. Ca(2+) may play an important structural role and promote stability of levansucrase. Catalyzes the synthesis of levan, a fructose polymer, by transferring the fructosyl moiety from sucrose to a growing acceptor molecule. Also displays sucrose hydrolase activity. This is Levansucrase from Bacillus amyloliquefaciens (Bacillus velezensis).